A 493-amino-acid polypeptide reads, in one-letter code: Probable UTP--glucose-1-phosphate uridylyltransferase (493 aa).

Residues 105–108, Gln181, Gly211, and Asp242 each bind UTP; that span reads LTGK. 107–108 is a substrate binding site; that stretch reads GK. 240-242 lines the substrate pocket; it reads NVD.

It belongs to the UDPGP type 1 family.

It catalyses the reaction alpha-D-glucose 1-phosphate + UTP + H(+) = UDP-alpha-D-glucose + diphosphate. In terms of biological role, plays a central role as a glucosyl donor in cellular metabolic pathways. The protein is Probable UTP--glucose-1-phosphate uridylyltransferase of Saccharomyces cerevisiae (strain ATCC 204508 / S288c) (Baker's yeast).